A 274-amino-acid chain; its full sequence is Probable formate transporter (274 aa).

7 helical membrane passes run 31–51, 62–82, 118–138, 176–196, 200–220, 226–246, and 248–268; these read IVLS…AEVV, AGLV…LVVI, VFNL…TGIL, AFWR…LAIA, IIGK…IGFE, MFFI…FFMN, and LIPV…CLYW.

The protein belongs to the FNT transporter (TC 1.A.16) family.

It is found in the cell membrane. Its function is as follows. May act as a formate transporter. The protein is Probable formate transporter (fdhC) of Methanothermobacter thermautotrophicus (Methanobacterium thermoformicicum).